Consider the following 313-residue polypeptide: Protein phosphatase PTC7 homolog fig (313 aa).

The 261-residue stretch at 47–307 (KEPLTDLQLR…DDITVILASL (261 aa)) folds into the PPM-type phosphatase domain. Residues D83, G84, and D229 each coordinate Mn(2+).

It belongs to the PP2C family. The cofactor is Mg(2+). Mn(2+) is required as a cofactor.

It carries out the reaction O-phospho-L-seryl-[protein] + H2O = L-seryl-[protein] + phosphate. The enzyme catalyses O-phospho-L-threonyl-[protein] + H2O = L-threonyl-[protein] + phosphate. This is Protein phosphatase PTC7 homolog fig from Drosophila virilis (Fruit fly).